A 27-amino-acid polypeptide reads, in one-letter code: Weak neurotoxin E3 (27 aa).

In terms of tissue distribution, expressed by the venom gland.

The protein resides in the secreted. In terms of biological role, binds to muscle nicotinic acetylcholine receptor (nAChR) and inhibit acetylcholine from binding to the receptor, thereby impairing neuromuscular transmission. The protein is Weak neurotoxin E3 of Micrurus pyrrhocryptus (Coral snake).